The following is a 129-amino-acid chain: Glycine cleavage system H protein (129 aa).

A Lipoyl-binding domain is found at 24–106 (LVRVGISAFA…HGEGWLLVLR (83 aa)). Lys-65 is subject to N6-lipoyllysine.

The protein belongs to the GcvH family. In terms of assembly, the glycine cleavage system is composed of four proteins: P, T, L and H. The cofactor is (R)-lipoate.

In terms of biological role, the glycine cleavage system catalyzes the degradation of glycine. The H protein shuttles the methylamine group of glycine from the P protein to the T protein. This Synechococcus sp. (strain CC9605) protein is Glycine cleavage system H protein.